The primary structure comprises 1205 residues: Nitric oxide synthase 3 (1205 aa).

The tract at residues 1–73 (MGNLKSVGQE…PPDGPKFPRV (73 aa)) is disordered. Residue Gly-2 is the site of N-myristoyl glycine attachment. S-palmitoyl cysteine attachment occurs at residues Cys-15 and Cys-26. Residues 15–27 (CGLGLGLGLGLCG) are compositionally biased toward gly residues. Over residues 44-54 (LAPPPSPPPAP) the composition is skewed to pro residues. 2 residues coordinate Zn(2+): Cys-96 and Cys-101. The interval 100–488 (RCLGSLVFPR…TDPWKGSASK (389 aa)) is interaction with NOSIP. Ser-104 provides a ligand contact to (6R)-L-erythro-5,6,7,8-tetrahydrobiopterin. Ser-116 bears the Phosphoserine; by CDK5 mark. Cys-186 lines the heme b pocket. L-arginine-binding residues include Gln-249, Trp-358, Tyr-359, Glu-363, and Asn-368. (6R)-L-erythro-5,6,7,8-tetrahydrobiopterin contacts are provided by Ala-448, Trp-449, and Phe-462. Tyr-477 serves as a coordination point for heme b. The tract at residues 492-512 (VTRKKTFKEVANAVKISASLM) is calmodulin-binding. At Thr-497 the chain carries Phosphothreonine; by AMPK. The region spanning 522-705 (ATILYGSETG…AFGGWAQAAF (184 aa)) is the Flavodoxin-like domain. Positions 528, 529, 530, 532, 574, and 575 each coordinate FMN. Phosphoserine is present on residues Ser-617, Ser-635, and Ser-640. FMN contacts are provided by Ser-656, Cys-663, Glu-689, and Gln-693. The FAD-binding FR-type domain maps to 758–1004 (RKMVQATVLA…IRGAPSFRLP (247 aa)). An NADP(+)-binding site is contributed by Arg-778. FAD is bound at residue His-800. Residues 819-850 (VEDPPPPGEPVAVEQLEKGSPGGPPPSWVRDP) are disordered. Ser-838 carries the post-translational modification Phosphoserine. Arg-940, Tyr-942, Ser-943, Thr-958, Ala-960, Tyr-964, Val-977, Cys-978, and Ser-979 together coordinate FAD. Residues Thr-1018, Arg-1051, Ser-1080, Arg-1081, Lys-1087, Tyr-1089, and Gln-1091 each coordinate NADP(+). At Thr-1177 the chain carries Phosphothreonine. Ser-1179 carries the post-translational modification Phosphoserine; by AMPK. Ser-1181 bears the Phosphoserine mark.

The protein belongs to the NOS family. In terms of assembly, homodimer. Interacts with NOSIP and NOSTRIN. Interacts with HSP90AB1. Forms a complex with ASL, ASS1 and SLC7A1; the complex regulates cell-autonomous L-arginine synthesis and citrulline recycling while channeling extracellular L-arginine to nitric oxide synthesis pathway. It depends on heme b as a cofactor. FAD is required as a cofactor. Requires FMN as cofactor. The cofactor is (6R)-L-erythro-5,6,7,8-tetrahydrobiopterin. Post-translationally, phosphorylation by AMPK at Ser-1179 in the presence of Ca(2+)-calmodulin (CaM) activates activity. In absence of Ca(2+)-calmodulin, AMPK also phosphorylates Thr-497, resulting in inhibition of activity. Phosphorylation of Ser-116 by CDK5 reduces activity.

It localises to the membrane. The protein resides in the caveola. Its subcellular location is the cytoplasm. It is found in the cytoskeleton. The protein localises to the golgi apparatus. It localises to the cell membrane. The enzyme catalyses 2 L-arginine + 3 NADPH + 4 O2 + H(+) = 2 L-citrulline + 2 nitric oxide + 3 NADP(+) + 4 H2O. Its activity is regulated as follows. Stimulated by calcium/calmodulin. Inhibited by NOSIP and NOSTRIN. Its function is as follows. Produces nitric oxide (NO) which is implicated in vascular smooth muscle relaxation through a cGMP-mediated signal transduction pathway. NO mediates vascular endothelial growth factor (VEGF)-induced angiogenesis in coronary vessels and promotes blood clotting through the activation of platelets. This chain is Nitric oxide synthase 3 (NOS3), found in Canis lupus familiaris (Dog).